Here is a 237-residue protein sequence, read N- to C-terminus: MDYSQLMGFGPDGWGYDMLRATAMTMAVAFSGFTIGLVFGCLGAAASLSSSGALQAAASGYTTALRGIPDLLVIYLFYFGSSSVISNVASLFGSSGFVGASTFLIGALAIGVVSGAYQTQVLRGAVLALNKGEIEAGRAYGMGALLLFRRIVLPQAARYALPGVGNVWQLVLKESALISVIGLVELMRQAQVGSGSTRQPFSFYLTAAALYLLITFVSGQVFRLAETRSMRGLQRGV.

The ABC transmembrane type-1 domain occupies 22-222; that stretch reads TAMTMAVAFS…LITFVSGQVF (201 aa). The next 4 membrane-spanning stretches (helical) occupy residues 26 to 46, 72 to 92, 96 to 116, and 202 to 222; these read MAVA…GAAA, LVIY…ASLF, GFVG…VSGA, and SFYL…GQVF.

This sequence belongs to the binding-protein-dependent transport system permease family. HisMQ subfamily.

The protein localises to the cell inner membrane. Its function is as follows. Component of the octopine active transport system probably consisting of four subunits: Q, M, P and T. This Agrobacterium tumefaciens (strain Ach5) protein is Octopine transport system permease protein OccQ (occQ).